Reading from the N-terminus, the 276-residue chain is Bifunctional protein FolD (276 aa).

NADP(+) is bound by residues 157-159 (NRS), Ser182, and Ile223.

Belongs to the tetrahydrofolate dehydrogenase/cyclohydrolase family. In terms of assembly, homodimer.

It carries out the reaction (6R)-5,10-methylene-5,6,7,8-tetrahydrofolate + NADP(+) = (6R)-5,10-methenyltetrahydrofolate + NADPH. The catalysed reaction is (6R)-5,10-methenyltetrahydrofolate + H2O = (6R)-10-formyltetrahydrofolate + H(+). It functions in the pathway one-carbon metabolism; tetrahydrofolate interconversion. Its function is as follows. Catalyzes the oxidation of 5,10-methylenetetrahydrofolate to 5,10-methenyltetrahydrofolate and then the hydrolysis of 5,10-methenyltetrahydrofolate to 10-formyltetrahydrofolate. This Thermoplasma acidophilum (strain ATCC 25905 / DSM 1728 / JCM 9062 / NBRC 15155 / AMRC-C165) protein is Bifunctional protein FolD.